Here is an 836-residue protein sequence, read N- to C-terminus: MERGTVLIQPGLWTRDTSWTLLYFLCYILPQTSPQVLRIGGIFETVENEPVNVEELAFKFAVTSINRNRTLMPNTTLTYDIQRINLFDSFEASRRACDQLALGVAALFGPSHSSSVSAVQSICNALEVPHIQTRWKHPSVDNRDLFYINLYPDYAAISRAVLDLVLYYNWKTVTVVYEDSTGLIRLQELIKAPSRYNIKIKIRQLPSGNKDAKPLLKEMKKGKEFYVIFDCSHETAAEILKQILFMGMMTEYYHYFFTTLDLFALDLELYRYSGVNMTGFRLLNIDNPHVSSIIEKWSMERLQAPPRPETGLLDGVMTTEAALMYDAVYMVAIASHRASQLTVSSLQCHRHKPWRLGPRFMNLIKEARWDGLTGRITFNKTDGLRKDFDLDIISLKEEGTEKIGIWNSNSGLNMTDGNRDRSNNITDSLANRTLIVTTILEEPYVMYRKSDKPLYGNDRFEGYCLDLLKELSNILGFLYDVKLVPDGKYGAQNDKGEWNGMVKELIDHRADLAVAPLTITYVREKVIDFSKPFMTLGISILYRKPNGTNPGVFSFLNPLSPDIWMYVLLACLGVSCVLFVIARFTPYEWYNPHPCNPDSDVVENNFTLLNSFWFGVGALMQQGSELMPKALSTRIVGGIWWFFTLIIISSYTANLAAFLTVERMESPIDSADDLAKQTKIEYGAVRDGSTMTFFKKSKISTYEKMWAFMSSRQPSALGVENIGGIFIVLAAGLVLSVFVAIGEFIYKSRKNNDIEQKGKSSRLRFYFRNKVRFHGSKTESLGVEKCLSFNAIMEELGISLKNQKKIKKKSRTKGKSSFTSILTCHQRRTQRKETVA.

The first 30 residues, 1–30 (MERGTVLIQPGLWTRDTSWTLLYFLCYILP), serve as a signal peptide directing secretion. Residues 31 to 561 (QTSPQVLRIG…VFSFLNPLSP (531 aa)) are Extracellular-facing. N-linked (GlcNAc...) asparagine glycans are attached at residues Asn68, Asn74, Asn276, Asn379, Asn413, Asn424, and Asn431. 3 residues coordinate L-glutamate: Pro516, Thr518, and Arg523. N-linked (GlcNAc...) asparagine glycosylation occurs at Asn546. The helical transmembrane segment at 562–582 (DIWMYVLLACLGVSCVLFVIA) threads the bilayer. Residues 583–638 (RFTPYEWYNPHPCNPDSDVVENNFTLLNSFWFGVGALMQQGSELMPKALSTRIVGG) lie on the Cytoplasmic side of the membrane. A helical membrane pass occupies residues 639–659 (IWWFFTLIIISSYTANLAAFL). Residues 660–721 (TVERMESPID…RQPSALGVEN (62 aa)) lie on the Extracellular side of the membrane. Positions 689 and 690 each coordinate L-glutamate. Residues 722–742 (IGGIFIVLAAGLVLSVFVAIG) traverse the membrane as a helical segment. The Cytoplasmic segment spans residues 743–836 (EFIYKSRKNN…RRTQRKETVA (94 aa)).

This sequence belongs to the glutamate-gated ion channel (TC 1.A.10.1) family. GRIK1 subfamily. In terms of assembly, homotetramer or heterotetramer of pore-forming glutamate receptor subunits. Tetramers may be formed by the dimerization of dimers. Can form functional heteromeric receptors with GRIK4 and GRIK5. Interacts with KLHL17. As to expression, most abundant in the cerebellum. Also present in the suprachiasmatic nuclei of the hypothalamus.

The protein resides in the cell membrane. The protein localises to the postsynaptic cell membrane. It catalyses the reaction Ca(2+)(in) = Ca(2+)(out). Ionotropic glutamate receptor that functions as a cation-permeable ligand-gated ion channel, gated by L-glutamate and the glutamatergic agonist kainic acid. L-glutamate acts as an excitatory neurotransmitter at many synapses in the central nervous system. Binding of the excitatory neurotransmitter L-glutamate induces a conformation change, leading to the opening of the cation channel, and thereby converts the chemical signal to an electrical impulse. The receptor then desensitizes rapidly and enters a transient inactive state, characterized by the presence of bound agonist. The protein is Glutamate receptor ionotropic, kainate 1 (Grik1) of Mus musculus (Mouse).